A 436-amino-acid chain; its full sequence is GTPase Der (436 aa).

EngA-type G domains lie at 4-167 (PTVA…PVEE) and 175-351 (IRFS…ESQN). GTP is bound by residues 10-17 (GRPNVGKS), 57-61 (DTGGI), 119-122 (NKVD), 181-188 (GRPNVGKS), 229-233 (DTAGM), and 294-297 (NKWD). One can recognise a KH-like domain in the interval 352-436 (KRIPSAVLND…PIHLIARKRK (85 aa)).

The protein belongs to the TRAFAC class TrmE-Era-EngA-EngB-Septin-like GTPase superfamily. EngA (Der) GTPase family. In terms of assembly, associates with the 50S ribosomal subunit.

Its function is as follows. GTPase that plays an essential role in the late steps of ribosome biogenesis. The chain is GTPase Der from Streptococcus pyogenes serotype M3 (strain ATCC BAA-595 / MGAS315).